The chain runs to 754 residues: Phosphoinositide 3-kinase regulatory subunit 6 (754 aa).

Residues 343–363 (ERDLPTGADELPAPGSPEMER) form a disordered region.

In terms of assembly, heterodimer of a catalytic subunit (PIK3CG) and a regulatory (PIK3R6) subunit. The binding of PIK3R6 to PIK3CG may exclude the binding of PIK3R5 to PIK3CG. Interacts with beta-gamma G protein dimers. Interacts with PDE3B and RAPGEF3; form a signaling complex that regulates phosphatidylinositol 3-kinase gamma in angiogenesis.

Its subcellular location is the cytoplasm. It localises to the cell membrane. In terms of biological role, regulatory subunit of the PI3K gamma complex. Acts as an adapter to drive activation of PIK3CG by beta-gamma G protein dimers. The PIK3CG:PIK3R6 heterodimer is much less sensitive to beta-gamma G protein dimers than PIK3CG:PIK3R5 and its membrane recruitment and beta-gamma G protein dimer-dependent activation requires HRAS bound to PIK3CG. Recruits of the PI3K gamma complex to a PDE3B:RAPGEF3 signaling complex involved in angiogenesis; signaling seems to involve RRAS. In Homo sapiens (Human), this protein is Phosphoinositide 3-kinase regulatory subunit 6 (PIK3R6).